Here is a 389-residue protein sequence, read N- to C-terminus: Flap endonuclease 1 (389 aa).

The segment at 1-105 (MGIKGLNKLL…GELAKRKERR (105 aa)) is N-domain. D34 is a binding site for Mg(2+). DNA contacts are provided by R47 and R71. Mg(2+) contacts are provided by D87, E170, E172, D191, and D193. An I-domain region spans residues 134–265 (DVTRFEKRTV…QTALKLMKEH (132 aa)). E170 contacts DNA. DNA contacts are provided by G243 and D245. D245 lines the Mg(2+) pocket. The tract at residues 351–359 (PQARLDGFF) is interaction with PCNA. Positions 360–389 (KVMPKEGGEKRKADDKKTKGKKPATKKAKK) are disordered. Residues 362–376 (MPKEGGEKRKADDKK) show a composition bias toward basic and acidic residues. Basic residues predominate over residues 377–389 (TKGKKPATKKAKK).

The protein belongs to the XPG/RAD2 endonuclease family. FEN1 subfamily. Interacts with PCNA. Three molecules of FEN1 bind to one PCNA trimer with each molecule binding to one PCNA monomer. PCNA stimulates the nuclease activity without altering cleavage specificity. Mg(2+) is required as a cofactor. Post-translationally, phosphorylated. Phosphorylation upon DNA damage induces relocalization to the nuclear plasma.

It is found in the nucleus. It localises to the nucleolus. The protein localises to the nucleoplasm. The protein resides in the mitochondrion. Functionally, structure-specific nuclease with 5'-flap endonuclease and 5'-3' exonuclease activities involved in DNA replication and repair. During DNA replication, cleaves the 5'-overhanging flap structure that is generated by displacement synthesis when DNA polymerase encounters the 5'-end of a downstream Okazaki fragment. It enters the flap from the 5'-end and then tracks to cleave the flap base, leaving a nick for ligation. Also involved in the long patch base excision repair (LP-BER) pathway, by cleaving within the apurinic/apyrimidinic (AP) site-terminated flap. Acts as a genome stabilization factor that prevents flaps from equilibrating into structures that lead to duplications and deletions. Also possesses 5'-3' exonuclease activity on nicked or gapped double-stranded DNA, and exhibits RNase H activity. Also involved in replication and repair of rDNA and in repairing mitochondrial DNA. The polypeptide is Flap endonuclease 1 (Yarrowia lipolytica (strain CLIB 122 / E 150) (Yeast)).